The following is a 413-amino-acid chain: Arginine biosynthesis bifunctional protein ArgJ (413 aa).

Residues Thr-160, Lys-186, Thr-197, Glu-277, Asn-408, and Thr-413 each contribute to the substrate site. The active-site Nucleophile is the Thr-197.

The protein belongs to the ArgJ family. In terms of assembly, heterotetramer of two alpha and two beta chains.

The protein resides in the cytoplasm. It carries out the reaction N(2)-acetyl-L-ornithine + L-glutamate = N-acetyl-L-glutamate + L-ornithine. The enzyme catalyses L-glutamate + acetyl-CoA = N-acetyl-L-glutamate + CoA + H(+). It participates in amino-acid biosynthesis; L-arginine biosynthesis; L-ornithine and N-acetyl-L-glutamate from L-glutamate and N(2)-acetyl-L-ornithine (cyclic): step 1/1. Its pathway is amino-acid biosynthesis; L-arginine biosynthesis; N(2)-acetyl-L-ornithine from L-glutamate: step 1/4. Catalyzes two activities which are involved in the cyclic version of arginine biosynthesis: the synthesis of N-acetylglutamate from glutamate and acetyl-CoA as the acetyl donor, and of ornithine by transacetylation between N(2)-acetylornithine and glutamate. The chain is Arginine biosynthesis bifunctional protein ArgJ from Prochlorococcus marinus (strain SARG / CCMP1375 / SS120).